Consider the following 625-residue polypeptide: Cysteine-rich receptor-like protein kinase 46 (625 aa).

Positions 1 to 23 (MASTLISSLAVVLPLTLLAPSMS) are cleaved as a signal peptide. Residues 24–252 (MKISRIDVLG…LLAMSFTKEN (229 aa)) are Extracellular-facing. Gnk2-homologous domains lie at 29 to 130 (IDVL…NYSF) and 135 to 237 (VSHQ…NYTF). N-linked (GlcNAc...) asparagine glycosylation is found at asparagine 38, asparagine 127, asparagine 234, and asparagine 252. A helical transmembrane segment spans residues 253-273 (LTYIFVISMVGVLAIAAGFWC). The Cytoplasmic segment spans residues 274–625 (GKCFYMRTSP…TKPPFLHDSM (352 aa)). The region spanning 331–621 (FNESCKLGVG…LPTPTKPPFL (291 aa)) is the Protein kinase domain. ATP contacts are provided by residues 337–345 (LGVGGYGEV) and lysine 359. Tyrosine 404 carries the phosphotyrosine modification. Catalysis depends on aspartate 454, which acts as the Proton acceptor. A Phosphoserine modification is found at serine 458. Threonine 499 is subject to Phosphothreonine. A Phosphotyrosine modification is found at tyrosine 507.

This sequence belongs to the protein kinase superfamily. Ser/Thr protein kinase family. CRK subfamily.

It localises to the membrane. It carries out the reaction L-seryl-[protein] + ATP = O-phospho-L-seryl-[protein] + ADP + H(+). It catalyses the reaction L-threonyl-[protein] + ATP = O-phospho-L-threonyl-[protein] + ADP + H(+). The polypeptide is Cysteine-rich receptor-like protein kinase 46 (Arabidopsis thaliana (Mouse-ear cress)).